We begin with the raw amino-acid sequence, 69 residues long: Cytochrome c oxidase subunit 8A, mitochondrial (69 aa).

Residues 1-25 (MSVLTSLLLRGLTGSARRLPVPRAK) constitute a mitochondrion transit peptide. Residues 26-36 (VHSMPPEEELG) lie on the Mitochondrial matrix side of the membrane. A helical membrane pass occupies residues 37–60 (IMEKAIGLTFCFVSLFLPAGWILS). The Mitochondrial intermembrane portion of the chain corresponds to 61-69 (HLEDYKRPE).

It belongs to the cytochrome c oxidase VIII family. Component of the cytochrome c oxidase (complex IV, CIV), a multisubunit enzyme composed of 14 subunits. The complex is composed of a catalytic core of 3 subunits MT-CO1, MT-CO2 and MT-CO3, encoded in the mitochondrial DNA, and 11 supernumerary subunits COX4I, COX5A, COX5B, COX6A, COX6B, COX6C, COX7A, COX7B, COX7C, COX8 and NDUFA4, which are encoded in the nuclear genome. The complex exists as a monomer or a dimer and forms supercomplexes (SCs) in the inner mitochondrial membrane with NADH-ubiquinone oxidoreductase (complex I, CI) and ubiquinol-cytochrome c oxidoreductase (cytochrome b-c1 complex, complex III, CIII), resulting in different assemblies (supercomplex SCI(1)III(2)IV(1) and megacomplex MCI(2)III(2)IV(2)). Post-translationally, in response to mitochondrial stress, the precursor protein is ubiquitinated by the SIFI complex in the cytoplasm before mitochondrial import, leading to its degradation. Within the SIFI complex, UBR4 initiates ubiquitin chain that are further elongated or branched by KCMF1.

It is found in the mitochondrion inner membrane. Its pathway is energy metabolism; oxidative phosphorylation. Functionally, component of the cytochrome c oxidase, the last enzyme in the mitochondrial electron transport chain which drives oxidative phosphorylation. The respiratory chain contains 3 multisubunit complexes succinate dehydrogenase (complex II, CII), ubiquinol-cytochrome c oxidoreductase (cytochrome b-c1 complex, complex III, CIII) and cytochrome c oxidase (complex IV, CIV), that cooperate to transfer electrons derived from NADH and succinate to molecular oxygen, creating an electrochemical gradient over the inner membrane that drives transmembrane transport and the ATP synthase. Cytochrome c oxidase is the component of the respiratory chain that catalyzes the reduction of oxygen to water. Electrons originating from reduced cytochrome c in the intermembrane space (IMS) are transferred via the dinuclear copper A center (CU(A)) of subunit 2 and heme A of subunit 1 to the active site in subunit 1, a binuclear center (BNC) formed by heme A3 and copper B (CU(B)). The BNC reduces molecular oxygen to 2 water molecules using 4 electrons from cytochrome c in the IMS and 4 protons from the mitochondrial matrix. The protein is Cytochrome c oxidase subunit 8A, mitochondrial (COX8A) of Macaca fascicularis (Crab-eating macaque).